A 364-amino-acid chain; its full sequence is UDP-N-acetylglucosamine--N-acetylmuramyl-(pentapeptide) pyrophosphoryl-undecaprenol N-acetylglucosamine transferase (364 aa).

Residues T10 to G12, N124, S195, I250, and Q295 contribute to the UDP-N-acetyl-alpha-D-glucosamine site.

Belongs to the glycosyltransferase 28 family. MurG subfamily.

It is found in the cell membrane. It catalyses the reaction Mur2Ac(oyl-L-Ala-gamma-D-Glu-L-Lys-D-Ala-D-Ala)-di-trans,octa-cis-undecaprenyl diphosphate + UDP-N-acetyl-alpha-D-glucosamine = beta-D-GlcNAc-(1-&gt;4)-Mur2Ac(oyl-L-Ala-gamma-D-Glu-L-Lys-D-Ala-D-Ala)-di-trans,octa-cis-undecaprenyl diphosphate + UDP + H(+). Its pathway is cell wall biogenesis; peptidoglycan biosynthesis. In terms of biological role, cell wall formation. Catalyzes the transfer of a GlcNAc subunit on undecaprenyl-pyrophosphoryl-MurNAc-pentapeptide (lipid intermediate I) to form undecaprenyl-pyrophosphoryl-MurNAc-(pentapeptide)GlcNAc (lipid intermediate II). This is UDP-N-acetylglucosamine--N-acetylmuramyl-(pentapeptide) pyrophosphoryl-undecaprenol N-acetylglucosamine transferase from Levilactobacillus brevis (strain ATCC 367 / BCRC 12310 / CIP 105137 / JCM 1170 / LMG 11437 / NCIMB 947 / NCTC 947) (Lactobacillus brevis).